The following is a 484-amino-acid chain: Phosphomevalonate kinase erg8 (484 aa).

Residues 54 to 77 are disordered; the sequence is REAASGSAHGRSDTPQAEGNVHGD. 184–194 is an ATP binding site; the sequence is AHKTGLGSSAA.

It belongs to the GHMP kinase family. Mevalonate kinase subfamily.

It carries out the reaction (R)-5-phosphomevalonate + ATP = (R)-5-diphosphomevalonate + ADP. Its pathway is isoprenoid biosynthesis; isopentenyl diphosphate biosynthesis via mevalonate pathway; isopentenyl diphosphate from (R)-mevalonate: step 2/3. Functionally, phosphomevalonate kinase; part of the second module of ergosterol biosynthesis pathway that includes the middle steps of the pathway. Erg8 converts 5-phosphomevalonate to 5-diphosphomevalonate. The second module is carried out in the vacuole and involves the formation of farnesyl diphosphate, which is also an important intermediate in the biosynthesis of ubiquinone, dolichol, heme and prenylated proteins. Activity by the mevalonate kinase erg12 (AFUA_4G07780) first converts mevalonate into 5-phosphomevalonate. 5-phosphomevalonate is then further converted to 5-diphosphomevalonate by the phosphomevalonate kinase erg8 (AFUA_5G10680). The diphosphomevalonate decarboxylase mvd1 (AFUA_4G07130) then produces isopentenyl diphosphate. The isopentenyl-diphosphate delta-isomerase idi1 (AFUA_6G11160) then catalyzes the 1,3-allylic rearrangement of the homoallylic substrate isopentenyl (IPP) to its highly electrophilic allylic isomer, dimethylallyl diphosphate (DMAPP). Finally the farnesyl diphosphate synthase erg20 (AFUA_5G02450) catalyzes the sequential condensation of isopentenyl pyrophosphate with dimethylallyl pyrophosphate, and then with the resultant geranylpyrophosphate to the ultimate product farnesyl pyrophosphate. In Aspergillus fumigatus (strain ATCC MYA-4609 / CBS 101355 / FGSC A1100 / Af293) (Neosartorya fumigata), this protein is Phosphomevalonate kinase erg8.